The primary structure comprises 427 residues: Serine--tRNA ligase (427 aa).

Residue 233–235 coordinates L-serine; that stretch reads TAE. An ATP-binding site is contributed by 264-266; sequence RSE. Glu287 is an L-serine binding site. 351 to 354 contacts ATP; the sequence is EISS. Residue Ser386 coordinates L-serine.

It belongs to the class-II aminoacyl-tRNA synthetase family. Type-1 seryl-tRNA synthetase subfamily. Homodimer. The tRNA molecule binds across the dimer.

Its subcellular location is the cytoplasm. It catalyses the reaction tRNA(Ser) + L-serine + ATP = L-seryl-tRNA(Ser) + AMP + diphosphate + H(+). It carries out the reaction tRNA(Sec) + L-serine + ATP = L-seryl-tRNA(Sec) + AMP + diphosphate + H(+). Its pathway is aminoacyl-tRNA biosynthesis; selenocysteinyl-tRNA(Sec) biosynthesis; L-seryl-tRNA(Sec) from L-serine and tRNA(Sec): step 1/1. Functionally, catalyzes the attachment of serine to tRNA(Ser). Is also able to aminoacylate tRNA(Sec) with serine, to form the misacylated tRNA L-seryl-tRNA(Sec), which will be further converted into selenocysteinyl-tRNA(Sec). The sequence is that of Serine--tRNA ligase from Thiobacillus denitrificans (strain ATCC 25259 / T1).